The following is a 308-amino-acid chain: PAK4-inhibitor inka1 (308 aa).

Positions 81 to 105 (EEEESASDPSAVSSPSSERSLEFDS) are disordered. Residues 87-98 (SDPSAVSSPSSE) are compositionally biased toward low complexity. 2 inka box regions span residues 164–201 (DPED…DLPE) and 281–308 (DTDY…IGYI).

This sequence belongs to the INKA family. As to quaternary structure, interacts with pak4/pak5.

The protein localises to the nucleus. It is found in the cytoplasm. Functionally, inhibitor of the serine/threonine-protein kinase pak4/pak5. Acts by binding pak4/pak5 in a substrate-like manner, inhibiting the protein kinase activity. Required for the proper migration of neural crest cells during embryonic development, probably by inhibiting pak4/pak5. The protein is PAK4-inhibitor inka1 of Danio rerio (Zebrafish).